Consider the following 453-residue polypeptide: Tubulin beta-1 chain (453 aa).

GTP contacts are provided by Q12, E71, S140, G144, T145, G146, N206, and N228. E71 lines the Mg(2+) pocket. The tract at residues 431-453 (TADGVEGYEEEGYENDHPEDDEE) is disordered. Residues 436–453 (EGYEEEGYENDHPEDDEE) are compositionally biased toward acidic residues.

The protein belongs to the tubulin family. Dimer of alpha and beta chains. A typical microtubule is a hollow water-filled tube with an outer diameter of 25 nm and an inner diameter of 15 nM. Alpha-beta heterodimers associate head-to-tail to form protofilaments running lengthwise along the microtubule wall with the beta-tubulin subunit facing the microtubule plus end conferring a structural polarity. Microtubules usually have 13 protofilaments but different protofilament numbers can be found in some organisms and specialized cells. The cofactor is Mg(2+).

It localises to the cytoplasm. The protein localises to the cytoskeleton. Its function is as follows. Tubulin is the major constituent of microtubules, a cylinder consisting of laterally associated linear protofilaments composed of alpha- and beta-tubulin heterodimers. Microtubules grow by the addition of GTP-tubulin dimers to the microtubule end, where a stabilizing cap forms. Below the cap, tubulin dimers are in GDP-bound state, owing to GTPase activity of alpha-tubulin. The protein is Tubulin beta-1 chain (TUBB) of Chondrus crispus (Carrageen Irish moss).